Reading from the N-terminus, the 394-residue chain is Isopentenyl-diphosphate delta-isomerase (394 aa).

Arginine 10–lysine 11 is a binding site for substrate. FMN-binding positions include threonine 67, glycine 68–threonine 70, serine 101, and asparagine 129. Serine 101 to arginine 103 lines the substrate pocket. Residue glutamine 168 participates in substrate binding. Glutamate 169 contacts Mg(2+). Residues lysine 200, serine 225, threonine 230, glycine 279 to arginine 281, and alanine 300 to leucine 301 each bind FMN.

The protein belongs to the IPP isomerase type 2 family. In terms of assembly, homooctamer. Dimer of tetramers. Requires FMN as cofactor. NADPH is required as a cofactor. The cofactor is Mg(2+).

It is found in the cytoplasm. It carries out the reaction isopentenyl diphosphate = dimethylallyl diphosphate. Functionally, involved in the biosynthesis of isoprenoids. Catalyzes the 1,3-allylic rearrangement of the homoallylic substrate isopentenyl (IPP) to its allylic isomer, dimethylallyl diphosphate (DMAPP). The sequence is that of Isopentenyl-diphosphate delta-isomerase from Pyrococcus furiosus (strain ATCC 43587 / DSM 3638 / JCM 8422 / Vc1).